A 304-amino-acid polypeptide reads, in one-letter code: Glutaminase (304 aa).

Residues serine 63, asparagine 114, glutamate 158, asparagine 165, tyrosine 189, tyrosine 240, and valine 258 each coordinate substrate.

It belongs to the glutaminase family. As to quaternary structure, homotetramer.

It carries out the reaction L-glutamine + H2O = L-glutamate + NH4(+). This chain is Glutaminase, found in Shewanella putrefaciens (strain CN-32 / ATCC BAA-453).